Here is a 203-residue protein sequence, read N- to C-terminus: CS5 fimbrial subunit (203 aa).

The N-terminal stretch at 1–22 (MKKNLLITSVLAMATVSGSVLA) is a signal peptide.

Its subcellular location is the fimbrium. Functionally, major subunit of fimbriae. Fimbriae (also called pili), are polar filaments radiating from the surface of the bacterium to a length of 0.5-1.5 micrometers and numbering 100-300 per cell. They enable bacteria to colonize the epithelium of specific host organs. The polypeptide is CS5 fimbrial subunit (Escherichia coli).